Consider the following 335-residue polypeptide: Tumor necrosis factor receptor superfamily member 6 (335 aa).

Positions 1–25 are cleaved as a signal peptide; that stretch reads MLGIWTLLPLVLTSVARLSSKSVNA. Topologically, residues 26 to 173 are extracellular; sequence QVTDINSKGL…KCKEEGSRSN (148 aa). Threonine 28 carries O-linked (GalNAc...) threonine glycosylation. TNFR-Cys repeat units lie at residues 47-83, 84-127, and 128-166; these read QNLE…PDCV, PCQE…NTKC, and RCKP…TKCK. Intrachain disulfides connect cysteine 59/cysteine 73, cysteine 63/cysteine 82, cysteine 85/cysteine 101, cysteine 104/cysteine 119, cysteine 107/cysteine 127, cysteine 129/cysteine 143, cysteine 146/cysteine 157, and cysteine 149/cysteine 165. 2 N-linked (GlcNAc...) asparagine glycosylation sites follow: asparagine 118 and asparagine 136. The helical transmembrane segment at 174–190 threads the bilayer; it reads LGWLCLLLLPIPLIVWV. Residues 191–335 are Cytoplasmic-facing; that stretch reads KRKEVQKTCR…NFRNEIQSLV (145 aa). The S-palmitoyl cysteine moiety is linked to residue cysteine 199. At serine 209 the chain carries Phosphoserine. The tract at residues 212 to 317 is interaction with HIPK3; that stretch reads SPTLNPETVA…EKIQTIILKD (106 aa). Threonine 214 is subject to Phosphothreonine. Phosphoserine is present on serine 225. An interaction with CALM region spans residues 230-254; sequence SKYITTIAGVMTLSQVKGFVRKNGV. Residues 230–314 form the Death domain; it reads SKYITTIAGV…TLAEKIQTII (85 aa). A (Microbial infection) N-beta-linked (GlcNAc) arginine glycan is attached at arginine 250.

As to quaternary structure, component of the death-induced signaling complex (DISC) composed of cell surface receptor FAS/CD95, adapter protein FADD and the CASP8 protease; recruitment of CASP8 to the complex is required for processing of CASP8 into the p18 and p10 subunits. Interacts directly (via DED domain) with NOL3 (via CARD domain); inhibits death-inducing signaling complex (DISC) assembly by inhibiting the increase in FAS-FADD binding induced by FAS activation. Binds DAXX. Interacts with HIPK3. Part of a complex containing HIPK3 and FADD. Binds RIPK1 and FAIM2. Interacts with BABAM2 and FEM1B. Interacts with CALM. In the absence of stimulation, interacts with BIRC2, DDX3X and GSK3B. The interaction with BIRC2 and DDX3X is further enhanced upon receptor stimulation and accompanied by DDX3X and BIRC2 cleavage. In terms of processing, (Microbial infection) Glycosylated at Arg-250 by enteropathogenic E.coli protein NleB1: arginine GlcNAcylation prevents homotypic/heterotypic death domain interactions. Post-translationally, palmitoylated. Palmitoylation by ZDHHC7 prevents the lysosomal degradation of FAS regulating its expression at the plasma membrane. N- and O-glycosylated. O-glycosylated with core 1 or possibly core 8 glycans. As to expression, isoform 1 and isoform 6 are expressed at equal levels in resting peripheral blood mononuclear cells. After activation there is an increase in isoform 1 and decrease in the levels of isoform 6.

It is found in the cell membrane. Its subcellular location is the membrane raft. The protein localises to the secreted. In terms of biological role, receptor for TNFSF6/FASLG. The adapter molecule FADD recruits caspase CASP8 to the activated receptor. The resulting death-inducing signaling complex (DISC) performs CASP8 proteolytic activation which initiates the subsequent cascade of caspases (aspartate-specific cysteine proteases) mediating apoptosis. FAS-mediated apoptosis may have a role in the induction of peripheral tolerance, in the antigen-stimulated suicide of mature T-cells, or both. The secreted isoforms 2 to 6 block apoptosis (in vitro). The chain is Tumor necrosis factor receptor superfamily member 6 (FAS) from Homo sapiens (Human).